Reading from the N-terminus, the 308-residue chain is uncharacterized protein (308 aa).

Residues 1-60 enclose the HTH lysR-type domain; sequence MNYSLKQLKVFVTVAQEKSFSRAGERIGLSQSAVSHSVKELENHTGVRLLDRTTREVVLT. The H-T-H motif DNA-binding region spans 20-39; the sequence is FSRAGERIGLSQSAVSHSVK.

Belongs to the LysR transcriptional regulatory family.

This is an uncharacterized protein from Shigella flexneri.